A 380-amino-acid chain; its full sequence is Queuine tRNA-ribosyltransferase (380 aa).

The Proton acceptor role is filled by Asp96. Substrate is bound by residues 96–100 (DSGGF), Asp150, Gln193, and Gly220. Positions 251–257 (GVGAPDS) are RNA binding. Asp270 (nucleophile) is an active-site residue. Residues 275 to 279 (TRIAR) form an RNA binding; important for wobble base 34 recognition region. Zn(2+) is bound by residues Cys308, Cys310, Cys313, and His339.

This sequence belongs to the queuine tRNA-ribosyltransferase family. As to quaternary structure, homodimer. Within each dimer, one monomer is responsible for RNA recognition and catalysis, while the other monomer binds to the replacement base PreQ1. Zn(2+) serves as cofactor.

The catalysed reaction is 7-aminomethyl-7-carbaguanine + guanosine(34) in tRNA = 7-aminomethyl-7-carbaguanosine(34) in tRNA + guanine. Its pathway is tRNA modification; tRNA-queuosine biosynthesis. Functionally, catalyzes the base-exchange of a guanine (G) residue with the queuine precursor 7-aminomethyl-7-deazaguanine (PreQ1) at position 34 (anticodon wobble position) in tRNAs with GU(N) anticodons (tRNA-Asp, -Asn, -His and -Tyr). Catalysis occurs through a double-displacement mechanism. The nucleophile active site attacks the C1' of nucleotide 34 to detach the guanine base from the RNA, forming a covalent enzyme-RNA intermediate. The proton acceptor active site deprotonates the incoming PreQ1, allowing a nucleophilic attack on the C1' of the ribose to form the product. After dissociation, two additional enzymatic reactions on the tRNA convert PreQ1 to queuine (Q), resulting in the hypermodified nucleoside queuosine (7-(((4,5-cis-dihydroxy-2-cyclopenten-1-yl)amino)methyl)-7-deazaguanosine). This chain is Queuine tRNA-ribosyltransferase, found in Streptococcus equi subsp. zooepidemicus (strain H70).